The chain runs to 217 residues: MQKFTLHKGLVAPMDRENVDTDAIIPKQFLKSIKKTGFGPNLFDEWRYLDQPGQPGVPESARKPNPDFVLNQPRYAGASILLARKNFGCGSSREHAPWALDQYGFRAIIAPSFADIFFNNSFKNGLLPIVLPEATVSQLFDEVHAFPGYELTVDLERQVIVRAQGAEIPFEVNAFRKYCLLNGFDDIGLTLRQADKIRAFEAERLATKPWLAHTMPA.

The protein belongs to the LeuD family. LeuD type 1 subfamily. Heterodimer of LeuC and LeuD.

The enzyme catalyses (2R,3S)-3-isopropylmalate = (2S)-2-isopropylmalate. The protein operates within amino-acid biosynthesis; L-leucine biosynthesis; L-leucine from 3-methyl-2-oxobutanoate: step 2/4. In terms of biological role, catalyzes the isomerization between 2-isopropylmalate and 3-isopropylmalate, via the formation of 2-isopropylmaleate. The protein is 3-isopropylmalate dehydratase small subunit of Paracidovorax citrulli (strain AAC00-1) (Acidovorax citrulli).